A 135-amino-acid polypeptide reads, in one-letter code: Hemoglobin subunit beta-2 (135 aa).

Residues 2–135 (HWTAEEKALV…VVDALSKGYH (134 aa)) enclose the Globin domain. Heme b contacts are provided by His57 and His81.

Belongs to the globin family. Hb 2 is a heterotetramer of two alpha and two beta-2 chains. Red blood cells (at protein level).

Its function is as follows. Involved in oxygen transport from gills to the various peripheral tissues. The polypeptide is Hemoglobin subunit beta-2 (Somniosus microcephalus (Greenland sleeper shark)).